Here is a 391-residue protein sequence, read N- to C-terminus: S-adenosylmethionine synthase (391 aa).

A disordered region spans residues 1–20 (MPRSDYLFTSESVSEGHPDK). His-17 contacts ATP. Mg(2+) is bound at residue Asp-19. Glu-45 is a binding site for K(+). Positions 58 and 102 each coordinate L-methionine. A flexible loop region spans residues 102–112 (QSADIAQGVDA). ATP is bound by residues 169–171 (DAK), 235–236 (KF), Asp-244, 250–251 (RK), Ala-267, and Lys-271. Asp-244 contributes to the L-methionine binding site. An L-methionine-binding site is contributed by Lys-275.

The protein belongs to the AdoMet synthase family. Homotetramer; dimer of dimers. Mg(2+) is required as a cofactor. K(+) serves as cofactor.

It localises to the cytoplasm. The enzyme catalyses L-methionine + ATP + H2O = S-adenosyl-L-methionine + phosphate + diphosphate. It participates in amino-acid biosynthesis; S-adenosyl-L-methionine biosynthesis; S-adenosyl-L-methionine from L-methionine: step 1/1. In terms of biological role, catalyzes the formation of S-adenosylmethionine (AdoMet) from methionine and ATP. The overall synthetic reaction is composed of two sequential steps, AdoMet formation and the subsequent tripolyphosphate hydrolysis which occurs prior to release of AdoMet from the enzyme. The polypeptide is S-adenosylmethionine synthase (Methylorubrum extorquens (strain CM4 / NCIMB 13688) (Methylobacterium extorquens)).